The primary structure comprises 474 residues: tRNA-2-methylthio-N(6)-dimethylallyladenosine synthase (474 aa).

In terms of domain architecture, MTTase N-terminal spans 3 to 120; it reads KKLLIKTWGC…LPEMIRQSQS (118 aa). 6 residues coordinate [4Fe-4S] cluster: Cys-12, Cys-49, Cys-83, Cys-157, Cys-161, and Cys-164. A Radical SAM core domain is found at 143-375; that stretch reads KAEGATAFVS…QQQVNSQAMR (233 aa). Positions 378–441 constitute a TRAM domain; sequence RLMLDTEQRV…ANSLRGELVR (64 aa).

Belongs to the methylthiotransferase family. MiaB subfamily. Monomer. The cofactor is [4Fe-4S] cluster.

It is found in the cytoplasm. The enzyme catalyses N(6)-dimethylallyladenosine(37) in tRNA + (sulfur carrier)-SH + AH2 + 2 S-adenosyl-L-methionine = 2-methylsulfanyl-N(6)-dimethylallyladenosine(37) in tRNA + (sulfur carrier)-H + 5'-deoxyadenosine + L-methionine + A + S-adenosyl-L-homocysteine + 2 H(+). Its function is as follows. Catalyzes the methylthiolation of N6-(dimethylallyl)adenosine (i(6)A), leading to the formation of 2-methylthio-N6-(dimethylallyl)adenosine (ms(2)i(6)A) at position 37 in tRNAs that read codons beginning with uridine. The polypeptide is tRNA-2-methylthio-N(6)-dimethylallyladenosine synthase (Aliivibrio fischeri (strain ATCC 700601 / ES114) (Vibrio fischeri)).